Consider the following 185-residue polypeptide: Peptidyl-tRNA hydrolase (185 aa).

Residue Tyr14 participates in tRNA binding. Catalysis depends on His19, which acts as the Proton acceptor. The tRNA site is built by Tyr64, Asn66, and Asn112.

Belongs to the PTH family. As to quaternary structure, monomer.

Its subcellular location is the cytoplasm. The catalysed reaction is an N-acyl-L-alpha-aminoacyl-tRNA + H2O = an N-acyl-L-amino acid + a tRNA + H(+). In terms of biological role, hydrolyzes ribosome-free peptidyl-tRNAs (with 1 or more amino acids incorporated), which drop off the ribosome during protein synthesis, or as a result of ribosome stalling. Functionally, catalyzes the release of premature peptidyl moieties from peptidyl-tRNA molecules trapped in stalled 50S ribosomal subunits, and thus maintains levels of free tRNAs and 50S ribosomes. In Ligilactobacillus salivarius (strain UCC118) (Lactobacillus salivarius), this protein is Peptidyl-tRNA hydrolase.